A 251-amino-acid chain; its full sequence is 3-deoxy-manno-octulosonate cytidylyltransferase (251 aa).

The protein belongs to the KdsB family.

The protein localises to the cytoplasm. The catalysed reaction is 3-deoxy-alpha-D-manno-oct-2-ulosonate + CTP = CMP-3-deoxy-beta-D-manno-octulosonate + diphosphate. Its pathway is nucleotide-sugar biosynthesis; CMP-3-deoxy-D-manno-octulosonate biosynthesis; CMP-3-deoxy-D-manno-octulosonate from 3-deoxy-D-manno-octulosonate and CTP: step 1/1. It functions in the pathway bacterial outer membrane biogenesis; lipopolysaccharide biosynthesis. Activates KDO (a required 8-carbon sugar) for incorporation into bacterial lipopolysaccharide in Gram-negative bacteria. The sequence is that of 3-deoxy-manno-octulosonate cytidylyltransferase from Geotalea uraniireducens (strain Rf4) (Geobacter uraniireducens).